The sequence spans 290 residues: MVDLTIEKTKYPRAFVVGSPIHHSKSPRIHNFWLKQYGLQGEYLAQEVTSEKFNHFITSFKKIGFCGGNVTLPHKQEAFRLADYKDKTATIIGAANTLWYEGDKLCATNSDTYGFSANLDDFASDWGGETALVFGAGGAARAILYALKERGFEQIYLVNRTKQRADNLAQHFGKNIKVYDWHKIHEILYQADLIVNTTSIGIKNPEEKSDSFFCDFHKAKKTALVTDIVYTPLITPFLQQAKSCGLKTVDGLGMLLHQAVIGFERWFGVRPQVTKALRTAILEDMSEERE.

Shikimate contacts are provided by residues 24 to 26 (SKS) and T71. Residue K75 is the Proton acceptor of the active site. Residues N96 and D111 each coordinate shikimate. Residues 135–139 (GAGGA), 159–164 (NRTKQR), and I228 each bind NADP(+). A shikimate-binding site is contributed by Y230. Residue G251 participates in NADP(+) binding.

The protein belongs to the shikimate dehydrogenase family. In terms of assembly, homodimer.

The enzyme catalyses shikimate + NADP(+) = 3-dehydroshikimate + NADPH + H(+). It functions in the pathway metabolic intermediate biosynthesis; chorismate biosynthesis; chorismate from D-erythrose 4-phosphate and phosphoenolpyruvate: step 4/7. Involved in the biosynthesis of the chorismate, which leads to the biosynthesis of aromatic amino acids. Catalyzes the reversible NADPH linked reduction of 3-dehydroshikimate (DHSA) to yield shikimate (SA). This is Shikimate dehydrogenase (NADP(+)) from Bartonella tribocorum (strain CIP 105476 / IBS 506).